The chain runs to 260 residues: MTSLKLLKEKAPLVICITNDVVKNFTANGLVALGASPAMSEFPEDLEDLLKYAGGLLINIGTLTDENWKLYQAALKIAEKYNVPAVLDPVACGAGEYRKKVADDLINNYKLAAIRGNAGEIASLVGIDVASKGVDSAGVDNIDEIALAANEKFNIPIVVTGEVDAIAVNGEVVTIHNGSAMMPKVIGTGCLLGAVVASFIGLEKGQELKSLETAMLVYNIAGEMAEKRPNGHLPGTFKVEFINSLYEITDEDVKEFKRVK.

Residue M39 coordinates substrate. ATP contacts are provided by R115 and T160. G187 is a substrate binding site.

It belongs to the Thz kinase family. The cofactor is Mg(2+).

The enzyme catalyses 5-(2-hydroxyethyl)-4-methylthiazole + ATP = 4-methyl-5-(2-phosphooxyethyl)-thiazole + ADP + H(+). The protein operates within cofactor biosynthesis; thiamine diphosphate biosynthesis; 4-methyl-5-(2-phosphoethyl)-thiazole from 5-(2-hydroxyethyl)-4-methylthiazole: step 1/1. Functionally, catalyzes the phosphorylation of the hydroxyl group of 4-methyl-5-beta-hydroxyethylthiazole (THZ). The sequence is that of Hydroxyethylthiazole kinase 1 from Streptococcus pneumoniae (strain JJA).